Consider the following 137-residue polypeptide: Basic phospholipase A2 beta-bungarotoxin A-AL4 chain (137 aa).

A signal peptide spans 1–10 (LAVCVSLLGA). Residues 11 to 18 (ANIPPQHL) constitute a propeptide that is removed on maturation. Cystine bridges form between C45-C137, C47-C63, C62-C118, C69-C111, C79-C104, and C97-C109. Ca(2+)-binding residues include Y46, G48, and G50. H66 is a catalytic residue. Ca(2+) is bound at residue D67. Residue D112 is part of the active site.

It belongs to the phospholipase A2 family. Group I subfamily. D49 sub-subfamily. Heterodimer; disulfide-linked. The A chains have phospholipase A2 activity and the B chains show homology with the basic protease inhibitors. It depends on Ca(2+) as a cofactor. In terms of tissue distribution, expressed by the venom gland.

The protein resides in the secreted. The catalysed reaction is a 1,2-diacyl-sn-glycero-3-phosphocholine + H2O = a 1-acyl-sn-glycero-3-phosphocholine + a fatty acid + H(+). Functionally, snake venom phospholipase A2 (PLA2) that inhibits neuromuscular transmission by blocking acetylcholine release from the nerve termini. PLA2 catalyzes the calcium-dependent hydrolysis of the 2-acyl groups in 3-sn-phosphoglycerides. The protein is Basic phospholipase A2 beta-bungarotoxin A-AL4 chain of Bungarus multicinctus (Many-banded krait).